We begin with the raw amino-acid sequence, 559 residues long: (-)-drimenol synthase (559 aa).

Mg(2+)-binding residues include Asp-311, Asp-315, Asp-456, Ser-460, and Glu-464. A DDXXD motif motif is present at residues 311-315 (DDIYD).

It belongs to the terpene synthase family. Requires Mg(2+) as cofactor.

The enzyme catalyses (2E,6E)-farnesyl diphosphate + H2O = (5S,9S,10S)-drim-7-en-11-ol + diphosphate. It participates in secondary metabolite biosynthesis; terpenoid biosynthesis. Its function is as follows. Catalyzes the conversion of (2E,6E)-farnesyl diphosphate (FPP) into drimenol, a precursor of the sesquiterpenoid polygodial. Polygodial has been shown to be an antifeedant for a number of herbivorous insects. The chain is (-)-drimenol synthase from Persicaria hydropiper (Marshpepper knotweed).